The sequence spans 314 residues: Olfactory receptor 5P72 (314 aa).

Topologically, residues 1–28 (MAFLEVGNHTAVTEFILLGLTDDPVLRV) are extracellular. The N-linked (GlcNAc...) asparagine glycan is linked to asparagine 8. A helical membrane pass occupies residues 29–49 (VLFTIILCIYLVTVMGNLSTI). The Cytoplasmic segment spans residues 50 to 57 (LLIRVSSQ). Residues 58 to 78 (LHHPMYFFLSHLASVDMGLSS) form a helical membrane-spanning segment. Residues 79–102 (SVTPNMLLNFLIERNTISYLGCGI) lie on the Extracellular side of the membrane. An intrachain disulfide couples cysteine 100 to cysteine 192. A helical membrane pass occupies residues 103–123 (QQSLADFFGSVECFLLAAMAY). The Cytoplasmic portion of the chain corresponds to 124-136 (DRFMAICNPLLYS). The helical transmembrane segment at 137 to 157 (TKMSTKVCVQLVVGSYIGGFL) threads the bilayer. The Extracellular portion of the chain corresponds to 158 to 199 (NASLIMFYFFSFLFCGPNRVDHFFCDFAPLVELSCSDVSVSV). Residues 200–220 (IVISFSAGSVTMITVFVIAVS) traverse the membrane as a helical segment. At 221-240 (YSYILITILKMHSIEGRHKA) the chain is on the cytoplasmic side. A helical transmembrane segment spans residues 241–261 (FSTCTSHLTAVTLYYGTITFI). Over 262 to 274 (YVMPKSSFSTDQN) the chain is Extracellular. The chain crosses the membrane as a helical span at residues 275–295 (KVVSVFYMVMIPMLNPLIYSL). The Cytoplasmic portion of the chain corresponds to 296-314 (RNNEIKGAIKRQLGKKMSC).

Belongs to the G-protein coupled receptor 1 family.

Its subcellular location is the cell membrane. Its function is as follows. Potential odorant receptor. The chain is Olfactory receptor 5P72 from Mus musculus (Mouse).